The following is a 501-amino-acid chain: Cytochrome P450 monooxygenase janQ (501 aa).

A helical membrane pass occupies residues 1–16 (MVLGLLAFIWLMRAWR). N-linked (GlcNAc...) asparagine glycosylation is present at Asn-132. Cys-439 is a binding site for heme.

Belongs to the cytochrome P450 family. It depends on heme as a cofactor.

The protein localises to the membrane. It participates in secondary metabolite biosynthesis. In terms of biological role, cytochrome P450 monooxygenase; part of the gene cluster that mediates the biosynthesis of the indole diterpenes janthitremanes such as shearinine K or shearinine A. The geranylgeranyl diphosphate (GGPP) synthase janG catalyzes the first step in janthitremane biosynthesis via conversion of farnesyl pyrophosphate and isopentyl pyrophosphate into geranylgeranyl pyrophosphate (GGPP). Condensation of indole-3-glycerol phosphate with GGPP by the prenyl transferase janC then forms 3-geranylgeranylindole (3-GGI). Epoxidation by the FAD-dependent monooxygenase janM leads to a epoxidized-GGI that is substrate of the terpene cyclase janB for cyclization to yield paspaline. Paspaline is subsequently converted to 13-desoxypaspaline by the cytochrome P450 monooxygenase janP, via beta-PC-M6 in a series of alpha-face oxidations. The cytochrome P450 monooxygenase janQ is proposed to carry out sequential beta-face oxidation steps at C-7 and C-13 of 13-desoxypaspaline to form paspalicine and paspalinine respectively. The indole diterpene prenyltransferase janD may then convert paspalinine into shearinine K which is substrate of janO and/or additional enzymes for oxidation and cyclization to generate shearinine A. The protein is Cytochrome P450 monooxygenase janQ of Penicillium janthinellum (Penicillium vitale).